The sequence spans 591 residues: Chaperone protein DnaK (591 aa).

At Thr175 the chain carries Phosphothreonine; by autocatalysis. Positions 568 to 577 are enriched in low complexity; it reads AQAAEFANKQ. The segment at 568–591 is disordered; it reads AQAAEFANKQNESDPNNNSSEQNN. A compositionally biased stretch (polar residues) spans 580–591; sequence SDPNNNSSEQNN.

Belongs to the heat shock protein 70 family.

In terms of biological role, acts as a chaperone. The polypeptide is Chaperone protein DnaK (Mycoplasma mycoides subsp. mycoides SC (strain CCUG 32753 / NCTC 10114 / PG1)).